The primary structure comprises 142 residues: Large ribosomal subunit protein uL11 (142 aa).

This sequence belongs to the universal ribosomal protein uL11 family. Part of the ribosomal stalk of the 50S ribosomal subunit. Interacts with L10 and the large rRNA to form the base of the stalk. L10 forms an elongated spine to which L12 dimers bind in a sequential fashion forming a multimeric L10(L12)X complex. One or more lysine residues are methylated.

Functionally, forms part of the ribosomal stalk which helps the ribosome interact with GTP-bound translation factors. This is Large ribosomal subunit protein uL11 from Mycobacteroides abscessus (strain ATCC 19977 / DSM 44196 / CCUG 20993 / CIP 104536 / JCM 13569 / NCTC 13031 / TMC 1543 / L948) (Mycobacterium abscessus).